We begin with the raw amino-acid sequence, 354 residues long: NADPH dehydrogenase (354 aa).

The FMN site is built by Ser-23, Pro-24, Cys-26, Ala-58, and Gln-100. Tyr-182 (proton donor) is an active-site residue. FMN is bound by residues Arg-230, Leu-301, Gly-323, and Arg-324.

Belongs to the NADH:flavin oxidoreductase/NADH oxidase family. NamA subfamily. Homodimer. Behaves as an active monomer in solution while in the crystal packing assembles following the classical dimeric architecture of other thermophilic-like ene-reductases. It depends on FMN as a cofactor.

It carries out the reaction A + NADPH + H(+) = AH2 + NADP(+). Its function is as follows. Ene-reductase that catalyzes the stereoselective reduction of activated C-C double bonds. Shows very good activity with 4-ketoisophorone, 2-cyclohexen-1-one and 1-octen-3-one, and low activity with maleimide, 2-methyl-pentenal, 2-methyl-cyclohexen-1-one, 2-cyclopenten-1-one and trans-2-hexen-1-al. Shows the highest catalytic efficiency with ketoisophorone. Exhibits a restricted substrate spectrum with generally lower activities compared to other ene-reductases. The sequence is that of NADPH dehydrogenase from Chloroflexus aggregans (strain MD-66 / DSM 9485).